The sequence spans 24 residues: M-poneritoxin-Ng1e (24 aa).

Expressed by the venom gland.

Its subcellular location is the secreted. It is found in the target cell membrane. In terms of biological role, has a broad spectrum of activity against both Gram-positive and Gram-negative bacteria and S.cerevisiae. Has insecticidal and hemolytic activities. May act by disrupting the integrity of the bacterial cell membrane. The protein is M-poneritoxin-Ng1e of Neoponera goeldii (Ponerine ant).